A 77-amino-acid chain; its full sequence is U11-lycotoxin-Ls1b (77 aa).

A signal peptide spans 1 to 20; that stretch reads MKLIIFTGLALFAIVSLIEA. Residues 21 to 26 constitute a propeptide that is removed on maturation; that stretch reads EEESGR.

The protein belongs to the neurotoxin 19 (CSTX) family. 10 (U11-Lctx) subfamily. Post-translationally, contains 4 disulfide bonds. Expressed by the venom gland.

It is found in the secreted. In Lycosa singoriensis (Wolf spider), this protein is U11-lycotoxin-Ls1b.